The following is a 395-amino-acid chain: MAKEKFDRSKTHANIGTIGHVDHGKTTLTAAIATVLSKKLGGEARSYDQIDNAPEEKERGITINTSHIEYETEKRHYAHVDCPGHADYVKNMITGAAQMDGGILVVSAADGPMPQTREHILLSRNVGVPALVVFLNKVDMVDDEELLELVEMEVRDLLSEYDFPGDDVPVIAGSALKALEGVEEYEDKIMELMDAVDEYIPTPERDSDKPFMMPVEDVFSITGRGTVATGRVERGQVKVGEEVEIIGLTEEPSKTTVTGVEMFRKLLDYAEAGDNIGALLRGVSREDVQRGQVLAKPGSITPHTKFKAEVYVLSKEEGGRHTPFFTNYRPQFYFRTTDVTGVVNLPEGTEMVMPGDNIEMNVELISPIAIEDGTRFSIREGGRTVGSGVVSVIEK.

The 195-residue stretch at 10–204 folds into the tr-type G domain; the sequence is KTHANIGTIG…AVDEYIPTPE (195 aa). The segment at 19–26 is G1; the sequence is GHVDHGKT. A GTP-binding site is contributed by 19–26; that stretch reads GHVDHGKT. A Mg(2+)-binding site is contributed by Thr26. The tract at residues 60–64 is G2; it reads GITIN. The interval 81–84 is G3; the sequence is DCPG. Residues 81 to 85 and 136 to 139 contribute to the GTP site; these read DCPGH and NKVD. Residues 136 to 139 are G4; it reads NKVD. The tract at residues 174–176 is G5; it reads SAL.

It belongs to the TRAFAC class translation factor GTPase superfamily. Classic translation factor GTPase family. EF-Tu/EF-1A subfamily. Monomer.

Its subcellular location is the cytoplasm. The catalysed reaction is GTP + H2O = GDP + phosphate + H(+). Functionally, GTP hydrolase that promotes the GTP-dependent binding of aminoacyl-tRNA to the A-site of ribosomes during protein biosynthesis. This chain is Elongation factor Tu, found in Macrococcus caseolyticus (strain JCSC5402) (Macrococcoides caseolyticum).